Consider the following 761-residue polypeptide: Prolyl oligopeptidase A (761 aa).

Catalysis depends on charge relay system residues S606, D690, and H726.

This sequence belongs to the peptidase S9A family. In terms of assembly, monomer.

It carries out the reaction Hydrolysis of Pro-|-Xaa &gt;&gt; Ala-|-Xaa in oligopeptides.. In terms of biological role, housekeeping prolyl oligopeptidase (POP) that behaves like a conventional POP by cleaving peptide bonds on the C-terminal side of prolyl residues within peptides that are up to approximately 30 amino acids long. The sequence is that of Prolyl oligopeptidase A from Amanita bisporigera (Destroying angel).